The sequence spans 88 residues: uncharacterized protein (88 aa).

This is an uncharacterized protein from Escherichia coli O157:H7.